The following is a 249-amino-acid chain: tRNA(Phe) (4-demethylwyosine(37)-C(7)) aminocarboxypropyltransferase (249 aa).

Residues serine 80, arginine 87, glutamate 127, and aspartate 154–asparagine 155 contribute to the S-adenosyl-L-methionine site.

The protein belongs to the class I-like SAM-binding methyltransferase superfamily. TRM5/TYW2 family.

It localises to the cytoplasm. The enzyme catalyses 4-demethylwyosine(37) in tRNA(Phe) + S-adenosyl-L-methionine = 4-demethyl-7-[(3S)-3-amino-3-carboxypropyl]wyosine(37) in tRNA(Phe) + S-methyl-5'-thioadenosine + H(+). In terms of biological role, S-adenosyl-L-methionine-dependent transferase that acts as a component of the wyosine derivatives biosynthesis pathway. Catalyzes the transfer of the alpha-amino-alpha-carboxypropyl (acp) group from S-adenosyl-L-methionine to 4-demethylwyosine (imG-14), forming 7-aminocarboxypropyl-demethylwyosine (wybutosine-86) at position 37 of tRNA(Phe). The protein is tRNA(Phe) (4-demethylwyosine(37)-C(7)) aminocarboxypropyltransferase of Methanocaldococcus jannaschii (strain ATCC 43067 / DSM 2661 / JAL-1 / JCM 10045 / NBRC 100440) (Methanococcus jannaschii).